The sequence spans 204 residues: Glycerol-3-phosphate acyltransferase (204 aa).

Helical transmembrane passes span tyrosine 6–alanine 26, leucine 80–histidine 100, leucine 122–isoleucine 142, lysine 144–valine 164, and alanine 168–isoleucine 188.

It belongs to the PlsY family. Probably interacts with PlsX.

It localises to the cell membrane. The catalysed reaction is an acyl phosphate + sn-glycerol 3-phosphate = a 1-acyl-sn-glycero-3-phosphate + phosphate. It functions in the pathway lipid metabolism; phospholipid metabolism. Functionally, catalyzes the transfer of an acyl group from acyl-phosphate (acyl-PO(4)) to glycerol-3-phosphate (G3P) to form lysophosphatidic acid (LPA). This enzyme utilizes acyl-phosphate as fatty acyl donor, but not acyl-CoA or acyl-ACP. The chain is Glycerol-3-phosphate acyltransferase from Clostridioides difficile (strain 630) (Peptoclostridium difficile).